Consider the following 254-residue polypeptide: MVWMNNSENTPGSLPPGRPLQTEFNDGRDYPRLGNFSFRRGTLTDNQEALWNEHWPKLGKVLADEVIDLPEWFDRDAETIAEIGSGTGTSTAAMAPLEAEKNIVAVELYRPGLAKLLGSVVRGDIHNVRMIRGDGVEVLQRMFAPESLSGVRIYFPDPWPKARHHKRRIVQSGTLHLIASRLKPGGILHIATDHADYAEWIDELVEVEEQLEYLGWPEDQSDIPQLTDRQVITKFEGKGLDKEHIIREYLWRKK.

Glu-82, Glu-107, Asp-134, and Asp-157 together coordinate S-adenosyl-L-methionine. Residue Asp-157 is part of the active site. Substrate contacts are provided by residues Lys-161, Asp-193, and 233–236; that span reads TKFE.

It belongs to the class I-like SAM-binding methyltransferase superfamily. TrmB family.

The enzyme catalyses guanosine(46) in tRNA + S-adenosyl-L-methionine = N(7)-methylguanosine(46) in tRNA + S-adenosyl-L-homocysteine. It functions in the pathway tRNA modification; N(7)-methylguanine-tRNA biosynthesis. Catalyzes the formation of N(7)-methylguanine at position 46 (m7G46) in tRNA. The polypeptide is tRNA (guanine-N(7)-)-methyltransferase (Corynebacterium jeikeium (strain K411)).